The sequence spans 429 residues: Adenylosuccinate synthetase (429 aa).

GTP is bound by residues 12–18 and 40–42; these read GDEGKGK and GHT. The active-site Proton acceptor is the D13. Mg(2+) contacts are provided by D13 and G40. IMP is bound by residues 13–16, 38–41, T128, R142, Q223, and R302; these read DEGK and NAGH. The active-site Proton donor is H41. 298-304 contacts substrate; it reads TVTGRPR. GTP is bound by residues R304, 330–332, and 412–414; these read LLD and SVG.

It belongs to the adenylosuccinate synthetase family. Homodimer. Mg(2+) serves as cofactor.

The protein resides in the cytoplasm. It carries out the reaction IMP + L-aspartate + GTP = N(6)-(1,2-dicarboxyethyl)-AMP + GDP + phosphate + 2 H(+). Its pathway is purine metabolism; AMP biosynthesis via de novo pathway; AMP from IMP: step 1/2. Its function is as follows. Plays an important role in the de novo pathway of purine nucleotide biosynthesis. Catalyzes the first committed step in the biosynthesis of AMP from IMP. The protein is Adenylosuccinate synthetase of Lactobacillus delbrueckii subsp. bulgaricus (strain ATCC 11842 / DSM 20081 / BCRC 10696 / JCM 1002 / NBRC 13953 / NCIMB 11778 / NCTC 12712 / WDCM 00102 / Lb 14).